The chain runs to 325 residues: tRNA dimethylallyltransferase (325 aa).

Residue 21–28 (GPTASGKS) participates in ATP binding. 23–28 (TASGKS) provides a ligand contact to substrate. The interval 166 to 170 (QRLAR) is interaction with substrate tRNA.

Belongs to the IPP transferase family. In terms of assembly, monomer. It depends on Mg(2+) as a cofactor.

The enzyme catalyses adenosine(37) in tRNA + dimethylallyl diphosphate = N(6)-dimethylallyladenosine(37) in tRNA + diphosphate. Functionally, catalyzes the transfer of a dimethylallyl group onto the adenine at position 37 in tRNAs that read codons beginning with uridine, leading to the formation of N6-(dimethylallyl)adenosine (i(6)A). The protein is tRNA dimethylallyltransferase of Acidiphilium cryptum (strain JF-5).